We begin with the raw amino-acid sequence, 270 residues long: Oxidoreductase NAD-binding domain-containing protein 1 (270 aa).

In terms of domain architecture, FAD-binding FR-type spans Met-20–Gln-123. Residue Gly-137–Pro-142 participates in NAD(+) binding.

This Danio rerio (Zebrafish) protein is Oxidoreductase NAD-binding domain-containing protein 1 (oxnad1).